A 386-amino-acid chain; its full sequence is Succinate--CoA ligase [ADP-forming] subunit beta (386 aa).

In terms of domain architecture, ATP-grasp spans 9–244; sequence KEILRKYGVP…HDEEDPLETR (236 aa). ATP contacts are provided by residues Lys-46, 53-55, Glu-99, Cys-102, and Glu-107; that span reads GRG. Residues Asn-199 and Asp-213 each contribute to the Mg(2+) site. Residues Asn-264 and 321–323 each bind substrate; that span reads GIM.

Belongs to the succinate/malate CoA ligase beta subunit family. As to quaternary structure, heterotetramer of two alpha and two beta subunits. It depends on Mg(2+) as a cofactor.

The catalysed reaction is succinate + ATP + CoA = succinyl-CoA + ADP + phosphate. The enzyme catalyses GTP + succinate + CoA = succinyl-CoA + GDP + phosphate. It participates in carbohydrate metabolism; tricarboxylic acid cycle; succinate from succinyl-CoA (ligase route): step 1/1. Its function is as follows. Succinyl-CoA synthetase functions in the citric acid cycle (TCA), coupling the hydrolysis of succinyl-CoA to the synthesis of either ATP or GTP and thus represents the only step of substrate-level phosphorylation in the TCA. The beta subunit provides nucleotide specificity of the enzyme and binds the substrate succinate, while the binding sites for coenzyme A and phosphate are found in the alpha subunit. In Rickettsia rickettsii (strain Iowa), this protein is Succinate--CoA ligase [ADP-forming] subunit beta.